A 150-amino-acid chain; its full sequence is Large ribosomal subunit protein bL9 (150 aa).

Belongs to the bacterial ribosomal protein bL9 family.

Binds to the 23S rRNA. In Corynebacterium diphtheriae (strain ATCC 700971 / NCTC 13129 / Biotype gravis), this protein is Large ribosomal subunit protein bL9.